The sequence spans 226 residues: Probable proteasome subunit beta type-1 (226 aa).

Positions 1–24 (MATTVKDTMNVDINAIKKGEIRMG) are cleaved as a propeptide — removed in mature form. Thr-25 acts as the Nucleophile in catalysis.

This sequence belongs to the peptidase T1B family. As to quaternary structure, the 26S proteasome consists of a 20S proteasome core and two 19S regulatory subunits. The 20S proteasome core is composed of 28 subunits that are arranged in four stacked rings, resulting in a barrel-shaped structure. The two end rings are each formed by seven alpha subunits, and the two central rings are each formed by seven beta subunits. The catalytic chamber with the active sites is on the inside of the barrel.

The protein localises to the cytoplasm. The protein resides in the nucleus. It carries out the reaction Cleavage of peptide bonds with very broad specificity.. The proteasome is a multicatalytic proteinase complex which is characterized by its ability to cleave peptides with Arg, Phe, Tyr, Leu, and Glu adjacent to the leaving group at neutral or slightly basic pH. The proteasome has an ATP-dependent proteolytic activity. The chain is Probable proteasome subunit beta type-1 (pre3) from Schizosaccharomyces pombe (strain 972 / ATCC 24843) (Fission yeast).